A 131-amino-acid polypeptide reads, in one-letter code: Probable ATP synthase subunit g 2, mitochondrial (131 aa).

It belongs to the ATPase g subunit family. In terms of assembly, subunit of the F-type ATPase which has 2 components, CF(1) - the catalytic core - and CF(0) - the membrane proton channel.

It localises to the mitochondrion membrane. Its function is as follows. Mitochondrial membrane ATP synthase (F(1)F(0) ATP synthase or Complex V) produces ATP from ADP in the presence of a proton gradient across the membrane which is generated by electron transport complexes of the respiratory chain. F-type ATPases consist of two structural domains, F(1) - containing the extramembraneous catalytic core, and F(0) - containing the membrane proton channel, linked together by a central stalk and a peripheral stalk. During catalysis, ATP synthesis in the catalytic domain of F(1) is coupled via a rotary mechanism of the central stalk subunits to proton translocation. Part of the complex F(0) domain. Minor subunit located with subunit a in the membrane. This Caenorhabditis elegans protein is Probable ATP synthase subunit g 2, mitochondrial.